We begin with the raw amino-acid sequence, 72 residues long: Translation initiation factor IF-1 (72 aa).

The S1-like domain occupies Met-1–Lys-72.

This sequence belongs to the IF-1 family. In terms of assembly, component of the 30S ribosomal translation pre-initiation complex which assembles on the 30S ribosome in the order IF-2 and IF-3, IF-1 and N-formylmethionyl-tRNA(fMet); mRNA recruitment can occur at any time during PIC assembly.

It localises to the cytoplasm. Its function is as follows. One of the essential components for the initiation of protein synthesis. Stabilizes the binding of IF-2 and IF-3 on the 30S subunit to which N-formylmethionyl-tRNA(fMet) subsequently binds. Helps modulate mRNA selection, yielding the 30S pre-initiation complex (PIC). Upon addition of the 50S ribosomal subunit IF-1, IF-2 and IF-3 are released leaving the mature 70S translation initiation complex. This chain is Translation initiation factor IF-1, found in Dinoroseobacter shibae (strain DSM 16493 / NCIMB 14021 / DFL 12).